The primary structure comprises 347 residues: GMP reductase (347 aa).

NADP(+) is bound at residue 108-131; the sequence is ADFEKTKQILDLNPALNFVCIDVA. The K(+) site is built by glycine 181 and glycine 183. Cysteine 186 (thioimidate intermediate) is an active-site residue. NADP(+) is bound at residue 216 to 239; that stretch reads IVSDGGCTTPGDVAKAFGGGADFV.

This sequence belongs to the IMPDH/GMPR family. GuaC type 1 subfamily. As to quaternary structure, homotetramer.

The enzyme catalyses IMP + NH4(+) + NADP(+) = GMP + NADPH + 2 H(+). Its function is as follows. Catalyzes the irreversible NADPH-dependent deamination of GMP to IMP. It functions in the conversion of nucleobase, nucleoside and nucleotide derivatives of G to A nucleotides, and in maintaining the intracellular balance of A and G nucleotides. This chain is GMP reductase, found in Escherichia coli (strain SMS-3-5 / SECEC).